A 113-amino-acid polypeptide reads, in one-letter code: Photosystem II reaction center Psb28 protein (113 aa).

This sequence belongs to the Psb28 family. In terms of assembly, part of the photosystem II complex.

The protein resides in the cellular thylakoid membrane. The sequence is that of Photosystem II reaction center Psb28 protein from Prochlorococcus marinus (strain NATL1A).